The following is a 613-amino-acid chain: UvrABC system protein C (613 aa).

The 78-residue stretch at 12 to 89 (DHPGVYIMHD…IKQHRPRYNV (78 aa)) folds into the GIY-YIG domain. In terms of domain architecture, UVR spans 199–234 (TALVKELKEQMEAAAARLEFEKAARLRDQLRAVQEV).

This sequence belongs to the UvrC family. As to quaternary structure, interacts with UvrB in an incision complex.

Its subcellular location is the cytoplasm. In terms of biological role, the UvrABC repair system catalyzes the recognition and processing of DNA lesions. UvrC both incises the 5' and 3' sides of the lesion. The N-terminal half is responsible for the 3' incision and the C-terminal half is responsible for the 5' incision. This Moorella thermoacetica (strain ATCC 39073 / JCM 9320) protein is UvrABC system protein C.